We begin with the raw amino-acid sequence, 498 residues long: ATP synthase subunit beta, chloroplastic (498 aa).

ATP is bound at residue 172 to 179; it reads GGAGVGKT.

The protein belongs to the ATPase alpha/beta chains family. As to quaternary structure, F-type ATPases have 2 components, CF(1) - the catalytic core - and CF(0) - the membrane proton channel. CF(1) has five subunits: alpha(3), beta(3), gamma(1), delta(1), epsilon(1). CF(0) has four main subunits: a(1), b(1), b'(1) and c(9-12).

It localises to the plastid. The protein resides in the chloroplast thylakoid membrane. It carries out the reaction ATP + H2O + 4 H(+)(in) = ADP + phosphate + 5 H(+)(out). Produces ATP from ADP in the presence of a proton gradient across the membrane. The catalytic sites are hosted primarily by the beta subunits. This chain is ATP synthase subunit beta, chloroplastic, found in Citrus sinensis (Sweet orange).